A 132-amino-acid chain; its full sequence is uncharacterized protein (132 aa).

Residues 10–30 (LVLFFTIILIALCPFVYYLWD) form a helical membrane-spanning segment. The stretch at 50-79 (KNCSTEIEHAIEEHKRKNKEKKEAKEKRLA) forms a coiled coil.

The protein resides in the membrane. This is an uncharacterized protein from Invertebrate iridescent virus 6 (IIV-6).